The primary structure comprises 480 residues: Docking protein 1 (480 aa).

M1 carries the N-acetylmethionine modification. A PH domain is found at 3–119; sequence GALMEGPLFL…WVQILCRTAF (117 aa). Residue S48 is modified to Phosphoserine. One can recognise an IRS-type PTB domain in the interval 151 to 259; that stretch reads EGSQFWVTSQ…QQQKAQGKVG (109 aa). Positions 253-262 are enriched in low complexity; the sequence is KAQGKVGQGQ. The segment at 253–328 is disordered; sequence KAQGKVGQGQ…GSTPAGAGEG (76 aa). Positions 265 to 276 are enriched in basic and acidic residues; that stretch reads TRTDSHDGETEG. A phosphoserine mark is found at S269 and S290. A phosphotyrosine mark is found at Y295, Y336, and Y340. Y361 carries the post-translational modification Phosphotyrosine; by INSR. Y376 bears the Phosphotyrosine mark. At Y397 the chain carries Phosphotyrosine; by INSR. The disordered stretch occupies residues 398 to 480; that stretch reads ELPYNPATDD…RVGVKSEGST (83 aa). Position 408 is a phosphotyrosine (Y408). Positions 410-423 are enriched in pro residues; it reads VPPPRSSKPTPAPK. Phosphoserine is present on S415. Residues 432–445 are compositionally biased toward low complexity; that stretch reads SGTTAGSGSKGSDT. The segment covering 446-455 has biased composition (polar residues); the sequence is ALYSQVQKSG. Y448 bears the Phosphotyrosine mark.

The protein belongs to the DOK family. Type A subfamily. Interacts with RasGAP and INPP5D/SHIP1. Interacts directly with phosphorylated ITGB3. Interacts with SRMS (via the SH2 and SH3 domains). In terms of processing, constitutively tyrosine-phosphorylated. Phosphorylated by TEC. Phosphorylated by LYN. Phosphorylated on tyrosine residues by the insulin receptor kinase. Results in the negative regulation of the insulin signaling pathway. Phosphorylated on tyrosine residues by SRMS.

Its subcellular location is the cytoplasm. It is found in the nucleus. Its function is as follows. DOK proteins are enzymatically inert adaptor or scaffolding proteins. They provide a docking platform for the assembly of multimolecular signaling complexes. DOK1 appears to be a negative regulator of the insulin signaling pathway. Modulates integrin activation by competing with talin for the same binding site on ITGB3. The protein is Docking protein 1 (Dok1) of Rattus norvegicus (Rat).